The sequence spans 429 residues: Histidine--tRNA ligase (429 aa).

The protein belongs to the class-II aminoacyl-tRNA synthetase family. Homodimer.

Its subcellular location is the cytoplasm. It carries out the reaction tRNA(His) + L-histidine + ATP = L-histidyl-tRNA(His) + AMP + diphosphate + H(+). This Pseudomonas putida (strain W619) protein is Histidine--tRNA ligase.